A 79-amino-acid polypeptide reads, in one-letter code: Anti-insect Ac4 (79 aa).

Positions 1–17 are cleaved as a signal peptide; it reads MISLSLLLMIGVESVRD. The 60-residue stretch at 18–77 folds into the LCN-type CS-alpha/beta domain; that stretch reads GYIVDFKNCVYRCVPPCDGLCKKNGGKGGSCSFLIGSGLACWCNALPDNVPIKDPLHKCP. 4 disulfide bridges follow: cysteine 26–cysteine 76, cysteine 30–cysteine 48, cysteine 34–cysteine 58, and cysteine 38–cysteine 60.

The protein belongs to the long (4 C-C) scorpion toxin superfamily. Sodium channel inhibitor family. Alpha subfamily. Expressed by the venom gland.

It is found in the secreted. Functionally, alpha toxins bind voltage-independently at site-3 of sodium channels (Nav) and inhibit the inactivation of the activated channels, thereby blocking neuronal transmission. This protein is weakly toxic against insects (ED(50)&gt;2 ug per 100 mg of blowfly larvae), but is inactive against mammalian sodium channels (rNav1.2a, and rNav1.4). This Androctonus crassicauda (Arabian fat-tailed scorpion) protein is Anti-insect Ac4.